Here is a 40-residue protein sequence, read N- to C-terminus: Sauvagin (40 aa).

Gln1 carries the post-translational modification Pyrrolidone carboxylic acid. Position 40 is an isoleucine amide (Ile40).

Belongs to the sauvagine/corticotropin-releasing factor/urotensin I family.

The protein resides in the secreted. Hypotensive and diuretic peptide. This chain is Sauvagin, found in Phyllomedusa sauvagei (Sauvage's leaf frog).